The primary structure comprises 49 residues: MRVQVGLKCEECGNRNYYTTKEKSKKDKLRLKKYCPKCNKHTFHTETKV.

It belongs to the bacterial ribosomal protein bL33 family.

This is Large ribosomal subunit protein bL33 from Fervidobacterium nodosum (strain ATCC 35602 / DSM 5306 / Rt17-B1).